A 130-amino-acid polypeptide reads, in one-letter code: uncharacterized protein (130 aa).

2 consecutive transmembrane segments (helical) span residues 35 to 57 (FLITLLSALFVIFILLLVSFISL) and 72 to 91 (IVFFAISAGAFFLILILLLL).

Its subcellular location is the cell membrane. This is an uncharacterized protein from Pasteurella multocida (strain Pm70).